The following is a 228-amino-acid chain: Protein K8.1 (228 aa).

The first 26 residues, 1–26 (MSSTQIRTEIPVALLILCLCLVACHA), serve as a signal peptide directing secretion. 4 N-linked (GlcNAc...) asparagine; by host glycosylation sites follow: asparagine 55, asparagine 60, asparagine 70, and asparagine 85. A disordered region spans residues 77 to 113 (GSPSSEYPNVSVSVEDTSASGSGEDAIDESGSGEEER). The span at 78–97 (SPSSEYPNVSVSVEDTSASG) shows a compositional bias: polar residues. Residues 197–217 (LYILWAVGLLLGLVLILYLCV) traverse the membrane as a helical segment.

It is found in the host membrane. The protein is Protein K8.1 (K8.1) of Human herpesvirus 8 type P (isolate GK18) (HHV-8).